Consider the following 581-residue polypeptide: MKASQFFISTLKEAPADAEVVSHQLMMRAGLIKKLGAGIYNYMPMGLRVIRKVEAIVREEMNRAGAVECTMPVVQPAELWQETGRFDKMGPELLRIHDRHGRDFVIQPTSEEVVTDIARQELRSYKQLPKNLYQIQTKFRDERRPRFGLMRGREFIMKDAYSFDRDQAGAKASYQVMAQAYRRIFDRFGLRYRAVAADSGAIGGDLSEEFQVIAATGEDAIVYCPASDYAANMEKAEALAPAGARPAAKQPLTVTPTPGKSTCADVAELLSVPLSTTVKSLVLATDETDAAGEIIRSQVWLLLLRGDHDMNEIKVAKVPGLDAGFRFATVAEIADHFGCKPGYLGPLNLQKPVKLVVDRDVAVMADWICGANQEGHHITGVNWGRDLPEPDMVADLRNVVAGDLSPDGQGELAIERGIEVGHVFYLGTKYSKAMNATFLGEDGKPAFFEMGCYGIGVTRLPAAAIEQNHDERGIIWPDAIAPFTVVICPVGMDRSEAVKAQAESLYADLLAAGVDVILDDRGERPGAMFADWELIGVPHRVTIGDKSLKEGQVEYQHRRDASATKVGVADILAHVKERLAA.

Belongs to the class-II aminoacyl-tRNA synthetase family. ProS type 1 subfamily. As to quaternary structure, homodimer.

The protein localises to the cytoplasm. The catalysed reaction is tRNA(Pro) + L-proline + ATP = L-prolyl-tRNA(Pro) + AMP + diphosphate. Catalyzes the attachment of proline to tRNA(Pro) in a two-step reaction: proline is first activated by ATP to form Pro-AMP and then transferred to the acceptor end of tRNA(Pro). As ProRS can inadvertently accommodate and process non-cognate amino acids such as alanine and cysteine, to avoid such errors it has two additional distinct editing activities against alanine. One activity is designated as 'pretransfer' editing and involves the tRNA(Pro)-independent hydrolysis of activated Ala-AMP. The other activity is designated 'posttransfer' editing and involves deacylation of mischarged Ala-tRNA(Pro). The misacylated Cys-tRNA(Pro) is not edited by ProRS. The protein is Proline--tRNA ligase of Acidovorax ebreus (strain TPSY) (Diaphorobacter sp. (strain TPSY)).